A 130-amino-acid chain; its full sequence is Secreted cysteine-rich effector 2 (130 aa).

The first 23 residues, 1–23 (MLINAARLLLPAAALVHLSLAWA), serve as a signal peptide directing secretion. A plant immunity suppression domain region spans residues 68–85 (LKNGEDWCKHCASPRVSV).

Its subcellular location is the secreted. The protein localises to the host cell. The protein resides in the host periplasm. In terms of biological role, secreted effector required for full virulence of U.virens. Inhibits host pathogen-associated molecular pattern-triggered immunity including flg22- and chitin-induced defense gene expression and oxidative burst. This is Secreted cysteine-rich effector 2 from Ustilaginoidea virens (Rice false smut fungus).